The primary structure comprises 146 residues: Protein LDOC1 (146 aa).

This sequence belongs to the LDOC1 family. As to quaternary structure, interacts with NOD2. As to expression, ubiquitously expressed with high levels in brain ant thyroid and low expression in placenta, liver and leukocytes. Expressed as well in six of the seven human breast cancer cell lines examined.

Its subcellular location is the nucleus. In terms of biological role, may have an important role in the development and/or progression of some cancers. This chain is Protein LDOC1 (LDOC1), found in Homo sapiens (Human).